The primary structure comprises 152 residues: Lipoprotein signal peptidase (152 aa).

The next 3 membrane-spanning stretches (helical) occupy residues 5–25 (LFVL…FWIV), 61–81 (WFFV…LATH), and 84–104 (LNIW…GNFI). Residues D114 and D130 contribute to the active site. A helical membrane pass occupies residues 125 to 145 (IFNVADSYLTVGVILLVICLW).

Belongs to the peptidase A8 family.

It is found in the cell membrane. The enzyme catalyses Release of signal peptides from bacterial membrane prolipoproteins. Hydrolyzes -Xaa-Yaa-Zaa-|-(S,diacylglyceryl)Cys-, in which Xaa is hydrophobic (preferably Leu), and Yaa (Ala or Ser) and Zaa (Gly or Ala) have small, neutral side chains.. It participates in protein modification; lipoprotein biosynthesis (signal peptide cleavage). In terms of biological role, this protein specifically catalyzes the removal of signal peptides from prolipoproteins. This chain is Lipoprotein signal peptidase, found in Streptococcus pyogenes serotype M3 (strain ATCC BAA-595 / MGAS315).